The chain runs to 417 residues: MFSRDLTLARYDAELFAAMKQEAQRQEDHIELIASENYTSPAVMEAQGSVLTNKYAEGYPGKRYYGGCEYVDIVEQLAIDRAKQLFGADYANVQPHAGSQANAAVYQALVKPGDTVLGMSLAHGGHLTHGASVNFSGKMYNAVQYGIDANGFIDYDEVERLALEHKPKMIVAGYSAYSQVLDFARFREIADKVGAYLFVDMAHFAGLVAAGVYPNPVPFADVVTTTTHKTLRGPRGGLILAKANEEIEKKLNSAVFPGGQGGPLEHVIAAKAVCFKEALQPDFKEYQQQVVKNAKAMAQVFIERGFDVVSGGTENHLFLVSLIKQEITGKDADAALGRAFITVNKNSVPNDPRSPFVTSGLRIGTPAVTTRGFKETECRELAGWICDILVDLNNEAVVDGVREKVQAICARFPVYGK.

(6S)-5,6,7,8-tetrahydrofolate is bound by residues Leu-121 and 125–127; that span reads GHL. N6-(pyridoxal phosphate)lysine is present on Lys-229. Residue 354–356 participates in (6S)-5,6,7,8-tetrahydrofolate binding; that stretch reads SPF.

This sequence belongs to the SHMT family. Homodimer. Pyridoxal 5'-phosphate is required as a cofactor.

It is found in the cytoplasm. The enzyme catalyses (6R)-5,10-methylene-5,6,7,8-tetrahydrofolate + glycine + H2O = (6S)-5,6,7,8-tetrahydrofolate + L-serine. It functions in the pathway one-carbon metabolism; tetrahydrofolate interconversion. The protein operates within amino-acid biosynthesis; glycine biosynthesis; glycine from L-serine: step 1/1. Functionally, catalyzes the reversible interconversion of serine and glycine with tetrahydrofolate (THF) serving as the one-carbon carrier. This reaction serves as the major source of one-carbon groups required for the biosynthesis of purines, thymidylate, methionine, and other important biomolecules. Also exhibits THF-independent aldolase activity toward beta-hydroxyamino acids, producing glycine and aldehydes, via a retro-aldol mechanism. This Azotobacter vinelandii (strain DJ / ATCC BAA-1303) protein is Serine hydroxymethyltransferase.